Consider the following 305-residue polypeptide: N-acetylglucosamine-1-phosphotransferase subunit gamma (305 aa).

The signal sequence occupies residues 1 to 24; that stretch reads MAAGLARLLLLLGLSAGGPAPAGA. Positions 69 to 171 constitute an MRH domain; it reads GKCFSLVEST…TFETPLVCHP (103 aa). Residues Cys-71 and Cys-84 are joined by a disulfide bond. Asn-88 and Asn-115 each carry an N-linked (GlcNAc...) asparagine glycan. 2 disulfides stabilise this stretch: Cys-129–Cys-157 and Cys-142–Cys-169. Positions 176 to 279 constitute a DMAP1-binding domain; the sequence is VYPTLPEALQ…YTRPTETSNL (104 aa). The disordered stretch occupies residues 267–305; the sequence is GIPYTRPTETSNLEHLGHETPRAKSPEQLRGDPGLRGSL. The span at 281–296 shows a compositional bias: basic and acidic residues; that stretch reads HLGHETPRAKSPEQLR.

Homodimer; disulfide-linked. Hexamer of two alpha (GNPTAB), two beta (GNPTAB) and two gamma (GNPTG) subunits; disulfide-linked. The alpha and/or the beta subunits of the enzyme constitute the catalytic subunits. Post-translationally, cys-245 mediates the formation of the interchain disulfide bond for formation of the homodimer. Cys-142, Cys-157 and Cys-169 are involved in intramolecular disulfide bonds formation. In terms of tissue distribution, widely expressed.

The protein resides in the secreted. The protein localises to the golgi apparatus. In terms of biological role, non-catalytic subunit of the N-acetylglucosamine-1-phosphotransferase complex, an enzyme that catalyzes the formation of mannose 6-phosphate (M6P) markers on high mannose type oligosaccharides in the Golgi apparatus. Binds and presents the high mannose glycans of the acceptor to the catalytic alpha and beta subunits (GNPTAB). Enhances the rate of N-acetylglucosamine-1-phosphate transfer to the oligosaccharides of acid hydrolase acceptors. The sequence is that of N-acetylglucosamine-1-phosphotransferase subunit gamma (GNPTG) from Homo sapiens (Human).